We begin with the raw amino-acid sequence, 603 residues long: MRVSRLMLVTLRDVPAEAEIVSHQLLIRGGFIKRVTSGIYAYMPLMWKVIKKITSIVQEELDSKGCLETLLPQLHPAELWKESGRWDGYTAGEGIMFHLSDRQGRELGLGPTHEEVITKIANEFLQSYKQLPVNLYQIQTKFRDEIRPRFGLMRSREFIMKDAYSFHADETNLKETYLEMNDAYEKIFKRCGLETVAVDADSGAIGGAESREFMVTAEAGEDLILLSPDKKYAANQEKAISKFADPIFLDKKEPCIIQTNGQRTIKELCDNQGFHPSQILKVIILLAVLEKNDLQPILVSIRGDQELNEVKLINAVSKYLKKSVISIKTITKEQLDSQKLLDIPLGFVGPDLKDSYLNKAANWNKKFIRFTDITASNLDSFICGANTIDQHRAFVNWSKVGGLPEIVDIRNAMPGDISIHDPKQKLIAKRGIEVGHIFQLGRKYSSCLQASFTNEMGLEEPFWMGCYGIGISRLAQASVEQNYDQSGIIWPLGIAPFEVIVIVANMKDDLQRELGEKLYSQLKDEGVDVLIDDRKERAGVKFKDADLIGIPWKIISGRDSATGIVELVERSTGISKSLKAEEAIKELLEEISNYKKSILQESL.

This sequence belongs to the class-II aminoacyl-tRNA synthetase family. ProS type 1 subfamily. As to quaternary structure, homodimer.

The protein resides in the cytoplasm. The catalysed reaction is tRNA(Pro) + L-proline + ATP = L-prolyl-tRNA(Pro) + AMP + diphosphate. In terms of biological role, catalyzes the attachment of proline to tRNA(Pro) in a two-step reaction: proline is first activated by ATP to form Pro-AMP and then transferred to the acceptor end of tRNA(Pro). As ProRS can inadvertently accommodate and process non-cognate amino acids such as alanine and cysteine, to avoid such errors it has two additional distinct editing activities against alanine. One activity is designated as 'pretransfer' editing and involves the tRNA(Pro)-independent hydrolysis of activated Ala-AMP. The other activity is designated 'posttransfer' editing and involves deacylation of mischarged Ala-tRNA(Pro). The misacylated Cys-tRNA(Pro) is not edited by ProRS. This Prochlorococcus marinus (strain SARG / CCMP1375 / SS120) protein is Proline--tRNA ligase.